Here is a 393-residue protein sequence, read N- to C-terminus: Formate-dependent phosphoribosylglycinamide formyltransferase (393 aa).

Residues 22 to 23 and glutamate 82 contribute to the N(1)-(5-phospho-beta-D-ribosyl)glycinamide site; that span reads EL. ATP-binding positions include arginine 114, lysine 155, 160-165, 195-198, and glutamate 203; these read SSGKGQ and EGFI. An ATP-grasp domain is found at 119 to 308; that stretch reads RLAAEELKLP…QFALHARAIL (190 aa). Mg(2+)-binding residues include glutamate 267 and glutamate 279. N(1)-(5-phospho-beta-D-ribosyl)glycinamide-binding positions include aspartate 286, lysine 356, and 363 to 364; that span reads RR.

The protein belongs to the PurK/PurT family. In terms of assembly, homodimer.

It catalyses the reaction N(1)-(5-phospho-beta-D-ribosyl)glycinamide + formate + ATP = N(2)-formyl-N(1)-(5-phospho-beta-D-ribosyl)glycinamide + ADP + phosphate + H(+). Its pathway is purine metabolism; IMP biosynthesis via de novo pathway; N(2)-formyl-N(1)-(5-phospho-D-ribosyl)glycinamide from N(1)-(5-phospho-D-ribosyl)glycinamide (formate route): step 1/1. Involved in the de novo purine biosynthesis. Catalyzes the transfer of formate to 5-phospho-ribosyl-glycinamide (GAR), producing 5-phospho-ribosyl-N-formylglycinamide (FGAR). Formate is provided by PurU via hydrolysis of 10-formyl-tetrahydrofolate. In Pseudomonas syringae pv. syringae (strain B728a), this protein is Formate-dependent phosphoribosylglycinamide formyltransferase.